The primary structure comprises 535 residues: MRISLKKSGMLKLGLSLVAMTVAASVQAKTLVYCSEGSPEGFNPQLFTSGTTYDASSVPLYNRLVEFKIGTTEVIPGLAEKWEVSEDGKTYTFHLRKGVKWHDNKEFKPTRELNADDVVFSFDRQKNAQNPYHKVSGGSYEYFEGMGLPELISEVKKVDDNTVQFVLTRPEAPFLADLAMDFASILSKEYADAMMKAGTPEKLDLNPIGTGPFQLQQYQKDSRIRYKAFDGYWGTKPQIDTLVFSITPDASVRYAKLQKNECQVMPYPNPADIARMKQDKSINLMEMPGLNVGYLSYNVQKKPLDDVKVRQALTYAVNKDAIIKAVYQGAGVSAKNLIPPTMWGYNDDVQDYTYDPEKAKALLKEAGLEKGFSIDLWAMPVQRPYNPNARRMAEMIQADWAKVGVQAKIVTYEWGEYLKRAKDGEHQTVMMGWTGDNGDPDNFFATLFSCAASEQGSNYSKWCYKPFEDLIQPARATDDHNKRVELYKQAQVVMHDQAPALIIAHSTVFEPVRKEVKGYVVDPLGKHHFENVSIE.

The N-terminal stretch at 1-28 (MRISLKKSGMLKLGLSLVAMTVAASVQA) is a signal peptide. Residues Cys-34 and Cys-262 are joined by a disulfide bond. Glycyl-L-leucine contacts are provided by residues 48-50 (TSG), 383-385 (RPY), and 433-436 (WTGD). Cys-450 and Cys-463 are oxidised to a cystine.

Belongs to the bacterial solute-binding protein 5 family. The complex is composed of two ATP-binding proteins (DppD and DppF), two transmembrane proteins (DppB and DppC) and a solute-binding protein (DppA).

The protein resides in the periplasm. Heme binding is inhibited by dipeptide. Part of the ABC transporter DppABCDF involved in dipeptide transport. Binds dipeptides and accepts a wide range of side chains, including small neutral, bulky hydrophobic, and positively and negatively charged groups. Tripeptides are poor substrates. DppA alone controls the specificity of the Dpp transporter. In addition, plays a role in chemotaxis toward peptides via interaction with the chemotaxis protein Tap. Functionally, binds heme. When a foreign outer membrane heme receptor is expressed in E.coli, DppABCDF can also transport heme and its precursor, 5-aminolevulinic acid (ALA), from the periplasm into the cytoplasm. This is Dipeptide-binding protein from Escherichia coli (strain K12).